A 297-amino-acid polypeptide reads, in one-letter code: uncharacterized protein (297 aa).

Positions 1-29 are disordered; sequence MAESKAKNMFQKLSLTPKRNHEHDAGRNI. Over residues 19 to 29 the composition is skewed to basic and acidic residues; it reads RNHEHDAGRNI.

This is an uncharacterized protein from Caenorhabditis elegans.